A 191-amino-acid chain; its full sequence is Protein GrpE (191 aa).

The span at 1–21 (MSDKKKNAEEFEETFSDKTSE) shows a compositional bias: basic and acidic residues. A disordered region spans residues 1-39 (MSDKKKNAEEFEETFSDKTSEDESTVENETVEENENEDV). Over residues 22–38 (DESTVENETVEENENED) the composition is skewed to acidic residues.

This sequence belongs to the GrpE family. As to quaternary structure, homodimer.

It is found in the cytoplasm. In terms of biological role, participates actively in the response to hyperosmotic and heat shock by preventing the aggregation of stress-denatured proteins, in association with DnaK and GrpE. It is the nucleotide exchange factor for DnaK and may function as a thermosensor. Unfolded proteins bind initially to DnaJ; upon interaction with the DnaJ-bound protein, DnaK hydrolyzes its bound ATP, resulting in the formation of a stable complex. GrpE releases ADP from DnaK; ATP binding to DnaK triggers the release of the substrate protein, thus completing the reaction cycle. Several rounds of ATP-dependent interactions between DnaJ, DnaK and GrpE are required for fully efficient folding. The chain is Protein GrpE from Tetragenococcus halophilus (Pediococcus halophilus).